Reading from the N-terminus, the 378-residue chain is Alanine dehydrogenase (378 aa).

Residues Arg15 and Lys74 each coordinate substrate. The active-site Proton donor/acceptor is the His95. Residues Ser132, 176 to 177 (VV), Asp196, Ser218, 237 to 238 (VL), 265 to 268 (VAID), and 297 to 300 (VANM) contribute to the NAD(+) site. The active-site Proton donor/acceptor is Asp268.

The protein belongs to the AlaDH/PNT family. As to quaternary structure, homohexamer. Trimer of dimer.

It localises to the cytoplasm. The enzyme catalyses L-alanine + NAD(+) + H2O = pyruvate + NH4(+) + NADH + H(+). It functions in the pathway amino-acid degradation; L-alanine degradation via dehydrogenase pathway; NH(3) and pyruvate from L-alanine: step 1/1. Catalyzes the reversible oxidative deamination of L-alanine to pyruvate. Oxidative deamination proceeds through a sequential, ordered ternary-binary mechanism, where NAD(+) binds first followed by L-alanine; the products are released in the order ammonia, pyruvate and NADH. Disruption blocks sporulation probably in stage V; 20-30% sporulation can be restored if the media is supplemented with pyruvate, suggesting lack of pyruvate blocks sporulation. Thus it is a key factor in the assimilation of L-alanine as an energy source via the tricarboxylic acid cycle during sporulation. This chain is Alanine dehydrogenase, found in Bacillus subtilis (strain 168).